The chain runs to 180 residues: MEQRRLASTEWVDIVNEENEVIAQASREQMRAQCLRHRATYIVVHDGMGKILVQRRTETKDFLPGMLDATAGGVVQADEQLLESARREAEEELGIAGVPFAEHGQFYFEDKNCRVWGALFSCVSHGPFALQEDEVSGVCWLTPEEITARCDEFTPDSLKALALWMKRNAKNEAVETETAE.

Positions 35 to 163 constitute a Nudix hydrolase domain; that stretch reads LRHRATYIVV…TPDSLKALAL (129 aa). The Nudix box signature appears at 72–94; sequence GGVVQADEQLLESARREAEEELG. Residues Glu88 and Glu92 each contribute to the Mg(2+) site.

The protein belongs to the Nudix hydrolase family. It depends on Mg(2+) as a cofactor.

This is an uncharacterized protein from Shigella flexneri.